A 101-amino-acid chain; its full sequence is Urease subunit beta (101 aa).

This sequence belongs to the urease beta subunit family. Heterotrimer of UreA (gamma), UreB (beta) and UreC (alpha) subunits. Three heterotrimers associate to form the active enzyme.

Its subcellular location is the cytoplasm. The catalysed reaction is urea + 2 H2O + H(+) = hydrogencarbonate + 2 NH4(+). The protein operates within nitrogen metabolism; urea degradation; CO(2) and NH(3) from urea (urease route): step 1/1. This chain is Urease subunit beta, found in Sinorhizobium fredii (strain NBRC 101917 / NGR234).